Here is a 191-residue protein sequence, read N- to C-terminus: MYEHYHSGWIECVTGSMFSGKSEELIRRVRRGLFAKQKVIVFKPSIDDRYSELEVVSHNGNKVEAVNVHHSSEILEHVKEAHDIIAIDEVQFFDNDIVGVATQLAEEGYRVIVAGLDMDFRGVPFEPVPELMAVSEHVTKLQAVCSVCGAPSSRTQRLIDGVPAKFDDPIILVGAKESYEPRCREHHVVPK.

ATP contacts are provided by residues 15 to 22 (GSMFSGKS) and 88 to 91 (DEVQ). The active-site Proton acceptor is the Glu-89. Residues Cys-145, Cys-148, Cys-183, and His-186 each coordinate Zn(2+).

It belongs to the thymidine kinase family. In terms of assembly, homotetramer.

Its subcellular location is the cytoplasm. The catalysed reaction is thymidine + ATP = dTMP + ADP + H(+). The protein is Thymidine kinase of Macrococcus caseolyticus (strain JCSC5402) (Macrococcoides caseolyticum).